The sequence spans 156 residues: Protein US1 (156 aa).

Disordered regions lie at residues 90–114 (RSRS…SDGD) and 133–156 (ARRW…DSTS). Residues 96-111 (AESGRSSSSSSVSVLS) are compositionally biased toward low complexity. Residues 147–156 (SQQAKNDSTS) are compositionally biased toward polar residues.

This chain is Protein US1 (US1), found in Homo sapiens (Human).